Consider the following 569-residue polypeptide: Formate--tetrahydrofolate ligase (569 aa).

68–75 (TPAGEGKT) is a binding site for ATP.

Belongs to the formate--tetrahydrofolate ligase family.

It catalyses the reaction (6S)-5,6,7,8-tetrahydrofolate + formate + ATP = (6R)-10-formyltetrahydrofolate + ADP + phosphate. It functions in the pathway one-carbon metabolism; tetrahydrofolate interconversion. The chain is Formate--tetrahydrofolate ligase from Psychrobacter sp. (strain PRwf-1).